The chain runs to 436 residues: Aminopeptidase C (436 aa).

Catalysis depends on residues Cys68, His356, and Asn378.

It belongs to the peptidase C1 family. As to quaternary structure, homohexamer.

The catalysed reaction is Inactivates bleomycin B2 (a cytotoxic glycometallopeptide) by hydrolysis of a carboxyamide bond of beta-aminoalanine, but also shows general aminopeptidase activity. The specificity varies somewhat with source, but amino acid arylamides of Met, Leu and Ala are preferred.. Hydrolyzes naphthylamide-substituted amino acids as well as di- and tripeptides in which the half-cystine residue is involved in a disulfide loop, notably in oxytocin and vasopressin. Also has a bleomycin hydrolase activity. In Lactococcus lactis subsp. cremoris (Streptococcus cremoris), this protein is Aminopeptidase C (pepC).